The following is a 466-amino-acid chain: Cysteine--tRNA ligase (466 aa).

C28 contributes to the Zn(2+) binding site. The 'HIGH' region signature appears at 30 to 40 (PTVYNYIHIGN). 3 residues coordinate Zn(2+): C208, H233, and E237. The 'KMSKS' region motif lies at 265-269 (KMSKS). K268 lines the ATP pocket.

It belongs to the class-I aminoacyl-tRNA synthetase family. As to quaternary structure, monomer. Zn(2+) is required as a cofactor.

It is found in the cytoplasm. The enzyme catalyses tRNA(Cys) + L-cysteine + ATP = L-cysteinyl-tRNA(Cys) + AMP + diphosphate. The chain is Cysteine--tRNA ligase from Staphylococcus saprophyticus subsp. saprophyticus (strain ATCC 15305 / DSM 20229 / NCIMB 8711 / NCTC 7292 / S-41).